A 279-amino-acid chain; its full sequence is Thioredoxin domain-containing protein plp1 (279 aa).

The segment covering 56–70 (RKEDTQDYNEPELHN) has biased composition (basic and acidic residues). A disordered region spans residues 56–75 (RKEDTQDYNEPELHNSNDPT). The Thioredoxin domain occupies 137 to 248 (FLTVENEREV…LEFRLLKSSA (112 aa)). Residues 254–267 (EESSSNKSIYHDEL) are compositionally biased toward basic and acidic residues. The tract at residues 254 to 279 (EESSSNKSIYHDELQNNQSDDSDFFE) is disordered. 2 positions are modified to phosphoserine: S272 and S275.

This sequence belongs to the phosducin family.

It localises to the cytoplasm. The protein localises to the nucleus. Functionally, inhibits early G-protein signaling events following pheromone stimulation. May help create heterodimerizable beta-tubulin by facilitating the efficient transfer of nascent beta-tubulin polypeptides to the folding apparatus. The protein is Thioredoxin domain-containing protein plp1 (plp1) of Schizosaccharomyces pombe (strain 972 / ATCC 24843) (Fission yeast).